The sequence spans 460 residues: Bifunctional protein GlmU (460 aa).

Positions 1-235 are pyrophosphorylase; the sequence is MALSAAIVLA…PLTVEGVNDR (235 aa). UDP-N-acetyl-alpha-D-glucosamine is bound by residues 9–12, Lys23, Gln76, and 81–82; these read LAAG and GT. Residue Asp109 participates in Mg(2+) binding. Residues Gly146, Glu161, Asn176, and Asn233 each contribute to the UDP-N-acetyl-alpha-D-glucosamine site. Residue Asn233 coordinates Mg(2+). The segment at 236-256 is linker; it reads VQLAALSKTYNRRVCERWMRD. The interval 257 to 460 is N-acetyltransferase; that stretch reads GVTILDPETT…VEGWKPAWER (204 aa). Arg338 and Lys356 together coordinate UDP-N-acetyl-alpha-D-glucosamine. His368 acts as the Proton acceptor in catalysis. UDP-N-acetyl-alpha-D-glucosamine-binding residues include Tyr371 and Asn382. Acetyl-CoA is bound by residues 391 to 392 and Ala428; that span reads NY.

The protein in the N-terminal section; belongs to the N-acetylglucosamine-1-phosphate uridyltransferase family. It in the C-terminal section; belongs to the transferase hexapeptide repeat family. As to quaternary structure, homotrimer. The cofactor is Mg(2+).

The protein resides in the cytoplasm. It catalyses the reaction alpha-D-glucosamine 1-phosphate + acetyl-CoA = N-acetyl-alpha-D-glucosamine 1-phosphate + CoA + H(+). It carries out the reaction N-acetyl-alpha-D-glucosamine 1-phosphate + UTP + H(+) = UDP-N-acetyl-alpha-D-glucosamine + diphosphate. Its pathway is nucleotide-sugar biosynthesis; UDP-N-acetyl-alpha-D-glucosamine biosynthesis; N-acetyl-alpha-D-glucosamine 1-phosphate from alpha-D-glucosamine 6-phosphate (route II): step 2/2. It functions in the pathway nucleotide-sugar biosynthesis; UDP-N-acetyl-alpha-D-glucosamine biosynthesis; UDP-N-acetyl-alpha-D-glucosamine from N-acetyl-alpha-D-glucosamine 1-phosphate: step 1/1. The protein operates within bacterial outer membrane biogenesis; LPS lipid A biosynthesis. Functionally, catalyzes the last two sequential reactions in the de novo biosynthetic pathway for UDP-N-acetylglucosamine (UDP-GlcNAc). The C-terminal domain catalyzes the transfer of acetyl group from acetyl coenzyme A to glucosamine-1-phosphate (GlcN-1-P) to produce N-acetylglucosamine-1-phosphate (GlcNAc-1-P), which is converted into UDP-GlcNAc by the transfer of uridine 5-monophosphate (from uridine 5-triphosphate), a reaction catalyzed by the N-terminal domain. The chain is Bifunctional protein GlmU from Bifidobacterium longum (strain DJO10A).